Here is a 669-residue protein sequence, read N- to C-terminus: Major S-layer protein (669 aa).

An N-terminal signal peptide occupies residues 1-24 (MKRFAAVSLAALMLLTVFASAASA). 5 N-linked (GlcNAc...) asparagine glycosylation sites follow: N36, N70, N116, N600, and N607. The tract at residues 588–648 (DGEVVDDDED…PTEADGTTPG (61 aa)) is disordered. Positions 590–627 (EVVDDDEDDDNVTEPVDNDTEVEEPTEEPTEGPTEEPT) are enriched in acidic residues. A helical membrane pass occupies residues 645 to 665 (TTPGFGVVLGLVGLLAVVYLV).

It belongs to the Methanosarcinales S-layer protein family. Glycosylated.

Its subcellular location is the secreted. It localises to the cell wall. The protein resides in the S-layer. It is found in the cell membrane. Its function is as follows. S-layer protein. The S-layer is a paracrystalline mono-layered assembly of proteins which coat the surface of the cell. This is Major S-layer protein from Methanosarcina mazei (strain ATCC BAA-159 / DSM 3647 / Goe1 / Go1 / JCM 11833 / OCM 88) (Methanosarcina frisia).